The chain runs to 2696 residues: Histone-lysine N-methyltransferase, H3 lysine-36 specific (2696 aa).

Serine 117 carries the phosphoserine modification. Disordered stretches follow at residues 207 to 252 (MGSE…EKAA) and 281 to 311 (DPDS…PFCQ). The span at 236–248 (QKNKQRNEVDGSN) shows a compositional bias: basic and acidic residues. Polar residues-rich tracts occupy residues 281–290 (DPDSSTSTLG) and 297–306 (GTSSSSTSQE). The PWWP 1 domain maps to 323 to 388 (VGDLIWAKFK…AGKAIVMFEG (66 aa)). Phosphoserine is present on residues serine 483 and serine 486. The tract at residues 487 to 514 (ADEKEKPCAKSRARKSSDNPKRTSVKKG) is disordered. Serine 766 carries the post-translational modification Phosphoserine. The segment at 872-891 (LGEDVSDSGTSKPSKPLLFS) is disordered. Residue lysine 906 forms a Glycyl lysine isopeptide (Lys-Gly) (interchain with G-Cter in SUMO2) linkage. Disordered stretches follow at residues 936-1035 (YRSP…DAFS), 1067-1093 (VLQG…PLQI), 1112-1134 (SKVK…NGKG), 1243-1272 (SIGD…SEKK), 1294-1344 (PKKK…EPPV), 1382-1428 (SPRP…KKGD), and 1480-1534 (KMQC…MQGE). The span at 948 to 961 (SPVGVSKVLVSGGS) shows a compositional bias: low complexity. The span at 971-982 (GTQNSANPSPSG) shows a compositional bias: polar residues. 3 stretches are compositionally biased toward basic and acidic residues: residues 1000–1017 (SDKR…DCVT), 1070–1090 (GDRE…KEDP), and 1112–1124 (SKVK…KISE). Residues 1300–1314 (KVQEQVHKVSSRCEE) show a composition bias toward basic and acidic residues. Positions 1323-1337 (SSAQNKQVDENSLIS) are enriched in polar residues. Lysine 1339 is covalently cross-linked (Glycyl lysine isopeptide (Lys-Gly) (interchain with G-Cter in SUMO2)). A Phosphoserine modification is found at serine 1510. The segment covering 1513-1523 (ETVEEGVEHDP) has biased composition (basic and acidic residues). 3 PHD-type zinc fingers span residues 1543–1589 (ENVC…CRTG), 1590–1646 (IHTC…CHAA), and 1707–1751 (VSWC…CKAG). The PWWP 2 domain maps to 1756-1818 (YREIVWVKVG…QARVFPYMEG (63 aa)). The region spanning 1890–1940 (SEIPRCNCKATDENPCGIDSECINRMLLYECHPTVCPAGGRCQNQCFSKRQ) is the AWS domain. The SET domain occupies 1942-2059 (PEVEIFRTLQ…AGTELTFNYN (118 aa)). S-adenosyl-L-methionine contacts are provided by residues 1952–1954 (RGW), 1994–1997 (TNFY), 2020–2021 (NH), asparagine 2065, and lysine 2071. Positions 2060 to 2066 (LECLGNG) are inhibits enzyme activity in the absence of bound histone. In terms of domain architecture, Post-SET spans 2066-2082 (GKTVCKCGAPNCSGFLG). The interval 2091–2111 (ATEEKSKKFKKKQQGKRRTQG) is disordered. Basic residues predominate over residues 2097-2108 (KKFKKKQQGKRR). The PHD-type 4; atypical zinc-finger motif lies at 2118-2165 (EDECFSCGDAGQLVSCKKPGCPKVYHADCLNLTKRPAGKWECPWHQCD). Residues 2213–2422 (LEPGEIREYV…SLSQRLPPPE (210 aa)) form a disordered region. Residues 2222–2232 (VPPPVPLPPGP) show a composition bias toward pro residues. Over residues 2281–2298 (RPLERTDSRPQPLDKVRD) the composition is skewed to basic and acidic residues. Over residues 2303–2314 (GTKSQSLVSSQR) the composition is skewed to polar residues. A compositionally biased stretch (low complexity) spans 2330–2348 (SDKPSPVTSPSSSPSVRSQ). The residue at position 2369 (serine 2369) is a Phosphoserine. Composition is skewed to polar residues over residues 2371-2381 (RPQSLEKTSVP) and 2394-2404 (ITSSPKPQTSD). Threonine 2462 carries the phosphothreonine modification. Disordered stretches follow at residues 2464–2499 (RQKE…GLGH), 2553–2575 (TQAS…QSPG), 2595–2616 (KSGQ…EEKK), and 2665–2696 (LGRG…SEQK). At serine 2471 the chain carries Phosphoserine. A Glycyl lysine isopeptide (Lys-Gly) (interchain with G-Cter in SUMO2) cross-link involves residue lysine 2616. Over residues 2674–2686 (EQNTLPALNQAPS) the composition is skewed to polar residues.

Belongs to the class V-like SAM-binding methyltransferase superfamily. In terms of assembly, interacts with the ligand-binding domains of RARA and THRA in the absence of ligand; in the presence of ligand the interaction is severely disrupted but some binding still occurs. Interacts with the ligand-binding domains of RXRA and ESRRA only in the presence of ligand. Interacts with ZNF496. Interacts with AR DNA- and ligand-binding domains. Expressed in the fetal/adult brain, kidney, skeletal muscle, spleen, and the thymus, and faintly in the lung.

Its subcellular location is the nucleus. The protein resides in the chromosome. The enzyme catalyses L-lysyl(36)-[histone H3] + 2 S-adenosyl-L-methionine = N(6),N(6)-dimethyl-L-lysyl(36)-[histone H3] + 2 S-adenosyl-L-homocysteine + 2 H(+). In terms of biological role, histone methyltransferase that dimethylates Lys-36 of histone H3 (H3K36me2). Transcriptional intermediary factor capable of both negatively or positively influencing transcription, depending on the cellular context. The chain is Histone-lysine N-methyltransferase, H3 lysine-36 specific (NSD1) from Homo sapiens (Human).